Consider the following 1458-residue polypeptide: MLELKTNVIQDPELKDSLDLQENDRVEIIGDAVHYIVNDHLNRVFNYTVDQQKIHAALITTFASGKKAIVVILDDIGYVYYVGDNNNDSYIINVPFSTESAWSSPSGLYLQRHRSSDENLNTDLPHIFCLNDPLDELTLIKFDGKKILSLFDSIVYVVGEIVVTHNKKEKKLSFWRSRFIDPESDQSIKSSRNRRRESSFSREKNPDLTRSDSIHYTANTRLSEKFEEQGLAYSTIFSHIESFPITGSTSFDSILGNGVLVITTLVKELEKGYMMLFRLVRDRSPYFLDSLQLHAINLSAIKSKHLQKIVVLSSKGKVSLESPMSPSLPIEGTFRSFRVHGATLYLEDTDGVQRYISLDNRASNSLVKWCLSVIRYVLPLREYEIFYTGHLYALFAFKLSHDEAFISSILACFTFFSRDKVHVEPIEDCNEAYSLSSKFHFKKEILIASQLSSHLDYSTFKNYLMPLAITLHFISEELRLDSVVKPRKDQLVALLLQITTWLKWPRYCEYYNFDIAETFLSIPLSIQVDVEEPVGPTSILQWIIECLRSQSTVPFYGLESYGLPHSCSTMFPQTLSLMQLLDCLLNPNMTLQNLVEEMVRLGISRKRCERYPFGILCIIFTVLEIAAEEYSPNWESEELRLVNRLDVDSFLHPKTPKWVFNKQDQEVKEIKALTSTVTDSTLVDTQSFHPYKVVTDMIFREDRRLAEVNKLLNYSSQITIMTEHFDVDLSSVPMQQKVAQCICVRTLSVPIGAGMLTYGSKNPLPTEKVTPRLFNFTLHLHPGTLIIQPNKEFVTQELTEWPEFNVGVALGLSISKFSKEINTSWIMFNRPETLTAYHAGFLFGLGLNGHLKALATWHSFIYLTSKHDTTSIGLLLGLASSYLGSMDAKVTKLLSVHISALLPVGSNELNISPLTQTAGILGIGLLFHDSCHRRMSEVTMEEILASNESELKNEGYKLAAGFSLGLINLGRGSNLPGMSDLKLVSRLQVGISSQATFQSLEAGSPGAIMALTMIYMKTNDLEVAKKIDIPKSRYLLDFYRPDLILLRVAGKNLIMWDEVKADYEWVKYQIPDIMLSQFDLQEKKVLSSDDLLLYNVLAGICFSLGLRFAGTGNPKAKEILINFLDSFIRLCHLPAKTHDERVTAVTVIRCTQIVALSSSCVMAGYCDLDVLRRLRVLHGRMEPVNYGAQMATHMALGILSLGGGRYSLSRSNLAIAALLISFYPQFPRTTQDNRAHLQAARNLWALAVEERCIIPRNQDTKQPCIVPLNVVQKSGAVQKLEAPILLPPYDSISSVSTLGDKYWNLKIDLDNNSDYRELLRESQTLTLMPYDRTSSKEEPLNLFPKLKDTSSPLWNLVKTSRLFQSSNSPLNVASLQESNNKTSLGVKLLLSMDFDNLTRDRLLSLQILLQFFESCWTGVLLNKFHSRQYLFLSRDLVEDLSLRVWEYVYSHNHNEESV.

The segment at 186-210 (QSIKSSRNRRRESSFSREKNPDLTR) is disordered. Residues 196–210 (RESSFSREKNPDLTR) show a composition bias toward basic and acidic residues. 4 PC repeats span residues 873–895 (GLLL…KLLS), 959–982 (AAGF…SDLK), 1006–1024 (GAIM…LEVA), and 1099–1124 (GICF…INFL).

It belongs to the APC1 family. As to quaternary structure, the APC/C is composed of at least 13 subunits: apc1, apc2, nuc2, apc4, apc5, cut9, apc8, apc10, apc11, hcn1, apc13, apc14 and apc15.

Component of the anaphase-promoting complex/cyclosome (APC/C), a cell cycle-regulated E3 ubiquitin-protein ligase complex that controls progression through mitosis and the G1 phase of the cell cycle. The APC/C is thought to confer substrate specificity and, in the presence of ubiquitin-conjugating E2 enzymes, it catalyzes the formation of protein-ubiquitin conjugates that are subsequently degraded by the 26S proteasome. Mutations to this protein prevent the exit from mitosis. The chain is Anaphase-promoting complex subunit 1 (cut4) from Schizosaccharomyces pombe (strain 972 / ATCC 24843) (Fission yeast).